A 529-amino-acid polypeptide reads, in one-letter code: Peptide chain release factor 3 (529 aa).

The tr-type G domain occupies 11 to 280 (AKRRTFAIIS…GLVAWAPAPM (270 aa)). GTP-binding positions include 20-27 (SHPDAGKT), 88-92 (DTPGH), and 142-145 (NKLD).

The protein belongs to the TRAFAC class translation factor GTPase superfamily. Classic translation factor GTPase family. PrfC subfamily.

Its subcellular location is the cytoplasm. Increases the formation of ribosomal termination complexes and stimulates activities of RF-1 and RF-2. It binds guanine nucleotides and has strong preference for UGA stop codons. It may interact directly with the ribosome. The stimulation of RF-1 and RF-2 is significantly reduced by GTP and GDP, but not by GMP. The polypeptide is Peptide chain release factor 3 (Edwardsiella ictaluri (strain 93-146)).